The primary structure comprises 304 residues: Movement protein (304 aa).

The disordered stretch occupies residues 257–304 (ETNKLSDVESSSDSSSLLSMRARSRRYTKNYKIPIKRHPQATGEVGTT). Positions 264–277 (VESSSDSSSLLSMR) are enriched in low complexity. Positions 278–295 (ARSRRYTKNYKIPIKRHP) are enriched in basic residues.

Its function is as follows. Cell-to-cell movement and long-distance transport of the viral infection. Also acts as a suppressor of RNA-mediated gene silencing, also known as post-transcriptional gene silencing (PTGS), a mechanism of plant viral defense that limits the accumulation of viral RNAs. This is Movement protein from Carnation ringspot virus (isolate Lommel) (CRSV).